The chain runs to 346 residues: Methylthioribose-1-phosphate isomerase (346 aa).

Substrate is bound by residues 54–56 (RGA), R91, and Q192. The Proton donor role is filled by D233. A substrate-binding site is contributed by 243-244 (NK).

The protein belongs to the eIF-2B alpha/beta/delta subunits family. MtnA subfamily.

The enzyme catalyses 5-(methylsulfanyl)-alpha-D-ribose 1-phosphate = 5-(methylsulfanyl)-D-ribulose 1-phosphate. It functions in the pathway amino-acid biosynthesis; L-methionine biosynthesis via salvage pathway; L-methionine from S-methyl-5-thio-alpha-D-ribose 1-phosphate: step 1/6. In terms of biological role, catalyzes the interconversion of methylthioribose-1-phosphate (MTR-1-P) into methylthioribulose-1-phosphate (MTRu-1-P). The polypeptide is Methylthioribose-1-phosphate isomerase (Yersinia pseudotuberculosis serotype O:1b (strain IP 31758)).